The primary structure comprises 225 residues: 3-demethoxyubiquinol 3-hydroxylase (225 aa).

Over residues Met-1–Thr-11 the composition is skewed to polar residues. Residues Met-1–Leu-20 are disordered. Glu-74, Glu-104, His-107, Glu-156, Glu-188, and His-191 together coordinate Fe cation. The interval Val-181–Leu-203 is disordered. A compositionally biased stretch (basic and acidic residues) spans Met-184–Ala-195.

It belongs to the COQ7 family. Requires Fe cation as cofactor.

The protein resides in the cell membrane. It catalyses the reaction a 5-methoxy-2-methyl-3-(all-trans-polyprenyl)benzene-1,4-diol + AH2 + O2 = a 3-demethylubiquinol + A + H2O. It participates in cofactor biosynthesis; ubiquinone biosynthesis. Catalyzes the hydroxylation of 2-nonaprenyl-3-methyl-6-methoxy-1,4-benzoquinol during ubiquinone biosynthesis. The protein is 3-demethoxyubiquinol 3-hydroxylase of Bordetella petrii (strain ATCC BAA-461 / DSM 12804 / CCUG 43448).